A 194-amino-acid polypeptide reads, in one-letter code: MKLLHLDSSALGATSISRELSAAIVAQQRRLYPEVEVTYRDLDRDPIPHLTAQTLAQTDPAEAAAAEAVMQQFLQAEVIVIGAPMYNFAIPSTLKAWIDRIAVAGRTFHYTANGPEGLAGGKRLIIASARGGVYAEPSNDFQEPYLRQLFGFLGIDDITLVRAEGVAYSPQHRADALAAALAGLRAEQDAAVMA.

FMN contacts are provided by residues serine 9, 15–17 (SIS), and 85–88 (MYNF).

It belongs to the azoreductase type 1 family. Homodimer. Requires FMN as cofactor.

It carries out the reaction 2 a quinone + NADH + H(+) = 2 a 1,4-benzosemiquinone + NAD(+). The catalysed reaction is N,N-dimethyl-1,4-phenylenediamine + anthranilate + 2 NAD(+) = 2-(4-dimethylaminophenyl)diazenylbenzoate + 2 NADH + 2 H(+). Its function is as follows. Quinone reductase that provides resistance to thiol-specific stress caused by electrophilic quinones. Also exhibits azoreductase activity. Catalyzes the reductive cleavage of the azo bond in aromatic azo compounds to the corresponding amines. The protein is FMN-dependent NADH:quinone oxidoreductase of Xanthomonas oryzae pv. oryzae (strain KACC10331 / KXO85).